Reading from the N-terminus, the 322-residue chain is Cytochrome c biogenesis protein CcsA (322 aa).

Helical transmembrane passes span 9–29, 44–64, 143–163, 226–246, 259–276, and 289–309; these read ILTH…LITL, GMIV…ASSG, MLLS…ILII, VISL…VWAN, ETWA…LHSR, and IASI…LLGI.

It belongs to the CcmF/CycK/Ccl1/NrfE/CcsA family. As to quaternary structure, may interact with Ccs1.

It is found in the plastid. Its subcellular location is the chloroplast thylakoid membrane. In terms of biological role, required during biogenesis of c-type cytochromes (cytochrome c6 and cytochrome f) at the step of heme attachment. In Triticum aestivum (Wheat), this protein is Cytochrome c biogenesis protein CcsA.